The following is a 293-amino-acid chain: Small ribosomal subunit protein uS2 (293 aa).

The segment at 239 to 293 is disordered; sequence PAGGADWEAAPAGFPAAATGEWSEAQPATWESGAAAATGPSTEWADSAPKDTAGW. A compositionally biased stretch (low complexity) spans 247–256; sequence AAPAGFPAAA.

This sequence belongs to the universal ribosomal protein uS2 family. As to quaternary structure, component of the small ribosomal subunit. Mature ribosomes consist of a small (40S) and a large (60S) subunit. The 40S subunit contains about 33 different proteins and 1 molecule of RNA (18S). The 60S subunit contains about 49 different proteins and 3 molecules of RNA (25S, 5.8S and 5S). Interacts with RPS21.

The protein localises to the cytoplasm. Required for the assembly and/or stability of the 40S ribosomal subunit. Required for the processing of the 20S rRNA-precursor to mature 18S rRNA in a late step of the maturation of 40S ribosomal subunits. This Chaetomium globosum (strain ATCC 6205 / CBS 148.51 / DSM 1962 / NBRC 6347 / NRRL 1970) (Soil fungus) protein is Small ribosomal subunit protein uS2.